The chain runs to 288 residues: Prohibitin-2 (288 aa).

The chain crosses the membrane as a helical; Signal-anchor for type II membrane protein span at residues 21–43; the sequence is GKYAFTGTGLLLALGLAGFAVQT. Positions 125 to 128 match the AIM motif; the sequence is YRTL.

The protein belongs to the prohibitin family. The mitochondrial prohibitin complex consists of two subunits (phb1 and phb2). The subunits assemble into a membrane-associated ring-shaped supercomplex of approximately 1 mDa.

It localises to the mitochondrion inner membrane. Functionally, prohibitin probably acts as a holdase/unfoldase for the stabilization of newly synthesized mitochondrial proteins. Involved in mitophagy; may act as an adapter for atg8 that supports mitophagosome assembly. Negatively regulates the proteolytic processing of atg32 via the i-AAA protease. Acts as a negative regulator of the m-AAA protease. The polypeptide is Prohibitin-2 (phb2) (Schizosaccharomyces pombe (strain 972 / ATCC 24843) (Fission yeast)).